Reading from the N-terminus, the 76-residue chain is Neuromacin-like protein (76 aa).

4 cysteine pairs are disulfide-bonded: C18/C25, C40/C44, C54/C61, and C72/C74.

Belongs to the macin family.

It localises to the secreted. The polypeptide is Neuromacin-like protein (Aplysia californica (California sea hare)).